Reading from the N-terminus, the 257-residue chain is MTQHFPTRQLRFFLTAPSPCPYLPERYERKVFAHLPLSDGATVNDSLTQVGFRRSQNIAYRPACEACSACVSARLPVTDYAFSRSERKVLARNEDLERHLVEAEATMEQFDLLRRYLLARHADGGMAEMTWPDYVAMVEDTAVRTHIIEYRTRPSDGGPGELVACALVDLMSDGLSLVYSFYDPTLGRRSLGSFVILDHVVQAGLAGLPYVYLGYWVRGSEKMDYKVRFSPIELLKAEGWTLMSSRDLRPKDELPGL.

It belongs to the R-transferase family. Bpt subfamily.

Its subcellular location is the cytoplasm. The catalysed reaction is N-terminal L-glutamyl-[protein] + L-leucyl-tRNA(Leu) = N-terminal L-leucyl-L-glutamyl-[protein] + tRNA(Leu) + H(+). It carries out the reaction N-terminal L-aspartyl-[protein] + L-leucyl-tRNA(Leu) = N-terminal L-leucyl-L-aspartyl-[protein] + tRNA(Leu) + H(+). Functions in the N-end rule pathway of protein degradation where it conjugates Leu from its aminoacyl-tRNA to the N-termini of proteins containing an N-terminal aspartate or glutamate. The sequence is that of Aspartate/glutamate leucyltransferase from Phenylobacterium zucineum (strain HLK1).